The sequence spans 424 residues: Serine--tRNA ligase (424 aa).

230 to 232 (TAE) lines the L-serine pocket. 261–263 (RAE) is an ATP binding site. Glu284 serves as a coordination point for L-serine. 348–351 (EISS) lines the ATP pocket. Ser384 is a binding site for L-serine.

It belongs to the class-II aminoacyl-tRNA synthetase family. Type-1 seryl-tRNA synthetase subfamily. Homodimer. The tRNA molecule binds across the dimer.

The protein localises to the cytoplasm. The enzyme catalyses tRNA(Ser) + L-serine + ATP = L-seryl-tRNA(Ser) + AMP + diphosphate + H(+). The catalysed reaction is tRNA(Sec) + L-serine + ATP = L-seryl-tRNA(Sec) + AMP + diphosphate + H(+). Its pathway is aminoacyl-tRNA biosynthesis; selenocysteinyl-tRNA(Sec) biosynthesis; L-seryl-tRNA(Sec) from L-serine and tRNA(Sec): step 1/1. Catalyzes the attachment of serine to tRNA(Ser). Is also able to aminoacylate tRNA(Sec) with serine, to form the misacylated tRNA L-seryl-tRNA(Sec), which will be further converted into selenocysteinyl-tRNA(Sec). The chain is Serine--tRNA ligase from Carboxydothermus hydrogenoformans (strain ATCC BAA-161 / DSM 6008 / Z-2901).